The primary structure comprises 115 residues: UPF0122 protein lp_1634 (115 aa).

This sequence belongs to the UPF0122 family.

In terms of biological role, might take part in the signal recognition particle (SRP) pathway. This is inferred from the conservation of its genetic proximity to ftsY/ffh. May be a regulatory protein. This Lactiplantibacillus plantarum (strain ATCC BAA-793 / NCIMB 8826 / WCFS1) (Lactobacillus plantarum) protein is UPF0122 protein lp_1634.